Consider the following 1103-residue polypeptide: DNA polymerase delta catalytic subunit (1103 aa).

The interval 1 to 29 (MDFKRRQGPGPGVPPKRARGGLWDEDEPS) is disordered. The Nuclear localization signal motif lies at 4 to 19 (KRRQGPGPGVPPKRAR). Omega-N-methylarginine is present on Arg-19. Lys-570 is covalently cross-linked (Glycyl lysine isopeptide (Lys-Gly) (interchain with G-Cter in SUMO2)). Zn(2+) is bound by residues Cys-1008, Cys-1011, Cys-1022, and Cys-1025. The segment at 1008–1025 (CIGCRSVINHQGAVCEFC) adopts a CysA-type zinc-finger fold. Cys-1054, Cys-1057, Cys-1067, and Cys-1072 together coordinate [4Fe-4S] cluster. The CysB motif motif lies at 1054–1072 (CQRCQGSLHEDVICTSRDC).

The protein belongs to the DNA polymerase type-B family. As to quaternary structure, component of the tetrameric DNA polymerase delta complex (Pol-delta4), which consists of POLD1/p125, POLD2/p50, POLD3/p66/p68 and POLD4/p12, with POLD1 bearing both DNA polymerase and 3' to 5' proofreading exonuclease activities. Within Pol-delta4, directly interacts with POLD2 and POLD4. Following genotoxic stress by DNA-damaging agents, such as ultraviolet light and methyl methanesulfonate, or by replication stress induced by treatment with hydroxyurea or aphidicolin, Pol-delta4 is converted into a trimeric form of the complex (Pol-delta3) by POLD4 degradation. Pol-delta3 is the major form at S phase replication sites and DNA damage sites. POLD1 displays different catalytic properties depending upon the complex it is found in. It exhibits higher proofreading activity and fidelity than Pol-delta4, making it particularly well suited to respond to DNA damage. Directly interacts with PCNA, as do POLD3 and POLD4; this interaction stimulates Pol-delta4 polymerase activity. As POLD2 and POLD4, directly interacts with WRNIP1; this interaction stimulates DNA polymerase delta-mediated DNA synthesis, independently of the presence of PCNA. This stimulation may be due predominantly to an increase of initiation frequency and also to increased processivity. Also observed as a dimeric complex with POLD2 (Pol-delta2). Pol-delta2 is relatively insensitive to the PCNA stimulation (2-5-fold) compared to Pol-delta4 that is stimulated by over 50-fold. The DNA polymerase delta complex interacts with POLDIP2; this interaction is probably mediated through direct binding to POLD2. Interacts with CIAO1. Interacts with POLDIP2. Interacts with RFC1. [4Fe-4S] cluster serves as cofactor.

It localises to the nucleus. It carries out the reaction DNA(n) + a 2'-deoxyribonucleoside 5'-triphosphate = DNA(n+1) + diphosphate. Regulated by alteration of quaternary structure. Exhibits burst rates of DNA synthesis are about 5 times faster in the presence of POLD4 (Pol-delta4 complex) than in its absence (Pol-delta3 complex), while the affinity of the enzyme for its DNA and dNTP substrates appears unchanged. The Pol-delta3 complex is more likely to proofread DNA synthesis because it cleaves single-stranded DNA twice as fast and transfers mismatched DNA from the polymerase to the exonuclease sites 9 times faster compared to the Pol-delta3 complex. Pol-delta3 also extends mismatched primers 3 times more slowly in the absence of POLD4. The conversion of Pol-delta4 into Pol-delta3 is induced by genotoxic stress or by replication stress leading POLD4 degradation. Stimulated in the presence of PCNA. This stimulation is further increased in the presence of KCTD13/PDIP1, most probably via direct interaction between KCTD13 and POLD2. As the catalytic component of the trimeric (Pol-delta3 complex) and tetrameric DNA polymerase delta complexes (Pol-delta4 complex), plays a crucial role in high fidelity genome replication, including in lagging strand synthesis, and repair. Exhibits both DNA polymerase and 3'- to 5'-exonuclease activities. Requires the presence of accessory proteins POLD2, POLD3 and POLD4 for full activity. Depending upon the absence (Pol-delta3) or the presence of POLD4 (Pol-delta4), displays differences in catalytic activity. Most notably, expresses higher proofreading activity in the context of Pol-delta3 compared with that of Pol-delta4. Although both Pol-delta3 and Pol-delta4 process Okazaki fragments in vitro, Pol-delta3 may be better suited to fulfill this task, exhibiting near-absence of strand displacement activity compared to Pol-delta4 and stalling on encounter with the 5'-blocking oligonucleotides. Pol-delta3 idling process may avoid the formation of a gap, while maintaining a nick that can be readily ligated. Along with DNA polymerase kappa, DNA polymerase delta carries out approximately half of nucleotide excision repair (NER) synthesis following UV irradiation. Under conditions of DNA replication stress, in the presence of POLD3 and POLD4, may catalyze the repair of broken replication forks through break-induced replication (BIR). Involved in the translesion synthesis (TLS) of templates carrying O6-methylguanine, 8oxoG or abasic sites. The chain is DNA polymerase delta catalytic subunit (POLD1) from Mesocricetus auratus (Golden hamster).